The following is a 399-amino-acid chain: S-adenosylmethionine synthase (399 aa).

Residue His-17 coordinates ATP. Asp-19 lines the Mg(2+) pocket. Glu-45 contributes to the K(+) binding site. Glu-58 and Gln-101 together coordinate L-methionine. The flexible loop stretch occupies residues 101-111; sequence QSADIAMGVDQ. Residues 177-179, 244-245, Asp-253, 259-260, Ala-276, and Lys-280 each bind ATP; these read DGK, RF, and RK. Asp-253 contributes to the L-methionine binding site. Lys-284 is an L-methionine binding site.

Belongs to the AdoMet synthase family. As to quaternary structure, homotetramer; dimer of dimers. The cofactor is Mg(2+). K(+) serves as cofactor.

It localises to the cytoplasm. It carries out the reaction L-methionine + ATP + H2O = S-adenosyl-L-methionine + phosphate + diphosphate. It functions in the pathway amino-acid biosynthesis; S-adenosyl-L-methionine biosynthesis; S-adenosyl-L-methionine from L-methionine: step 1/1. Its function is as follows. Catalyzes the formation of S-adenosylmethionine (AdoMet) from methionine and ATP. The overall synthetic reaction is composed of two sequential steps, AdoMet formation and the subsequent tripolyphosphate hydrolysis which occurs prior to release of AdoMet from the enzyme. This chain is S-adenosylmethionine synthase, found in Bacillus anthracis (strain A0248).